Here is a 297-residue protein sequence, read N- to C-terminus: Phosphatidylserine decarboxylase proenzyme (297 aa).

Catalysis depends on charge relay system; for autoendoproteolytic cleavage activity residues Asp100, His157, and Ser263. Ser263 (schiff-base intermediate with substrate; via pyruvic acid; for decarboxylase activity) is an active-site residue. Ser263 is modified (pyruvic acid (Ser); by autocatalysis).

Belongs to the phosphatidylserine decarboxylase family. PSD-B subfamily. Prokaryotic type I sub-subfamily. As to quaternary structure, heterodimer of a large membrane-associated beta subunit and a small pyruvoyl-containing alpha subunit. The cofactor is pyruvate. In terms of processing, is synthesized initially as an inactive proenzyme. Formation of the active enzyme involves a self-maturation process in which the active site pyruvoyl group is generated from an internal serine residue via an autocatalytic post-translational modification. Two non-identical subunits are generated from the proenzyme in this reaction, and the pyruvate is formed at the N-terminus of the alpha chain, which is derived from the carboxyl end of the proenzyme. The autoendoproteolytic cleavage occurs by a canonical serine protease mechanism, in which the side chain hydroxyl group of the serine supplies its oxygen atom to form the C-terminus of the beta chain, while the remainder of the serine residue undergoes an oxidative deamination to produce ammonia and the pyruvoyl prosthetic group on the alpha chain. During this reaction, the Ser that is part of the protease active site of the proenzyme becomes the pyruvoyl prosthetic group, which constitutes an essential element of the active site of the mature decarboxylase.

The protein localises to the cell membrane. The catalysed reaction is a 1,2-diacyl-sn-glycero-3-phospho-L-serine + H(+) = a 1,2-diacyl-sn-glycero-3-phosphoethanolamine + CO2. It functions in the pathway phospholipid metabolism; phosphatidylethanolamine biosynthesis; phosphatidylethanolamine from CDP-diacylglycerol: step 2/2. Catalyzes the formation of phosphatidylethanolamine (PtdEtn) from phosphatidylserine (PtdSer). The protein is Phosphatidylserine decarboxylase proenzyme of Glaesserella parasuis serovar 5 (strain SH0165) (Haemophilus parasuis).